We begin with the raw amino-acid sequence, 367 residues long: Cobalt-precorrin-5B C(1)-methyltransferase (367 aa).

The protein belongs to the CbiD family.

The catalysed reaction is Co-precorrin-5B + S-adenosyl-L-methionine = Co-precorrin-6A + S-adenosyl-L-homocysteine. Its pathway is cofactor biosynthesis; adenosylcobalamin biosynthesis; cob(II)yrinate a,c-diamide from sirohydrochlorin (anaerobic route): step 6/10. In terms of biological role, catalyzes the methylation of C-1 in cobalt-precorrin-5B to form cobalt-precorrin-6A. This Priestia megaterium (Bacillus megaterium) protein is Cobalt-precorrin-5B C(1)-methyltransferase.